The primary structure comprises 207 residues: MIRKCTEHGYFRGGSCLQCKRPGRYLLDDNKEEKLGRFVSGTLRHFPESAGVTMDRFGWVNINDFCDVMRKRYSWMRKEYLYALVESDEKGRYEIRNSRIRARYGHSVNIDLDYRESDSPYLYYGASPEEVDVLLENGIFPIKQRYVHLSTSYEKAVEVALIHTENPVILQIDAFKAQEDGISLKLATDDIVLAERIPPEYLFVVEE.

The protein belongs to the KptA/TPT1 family.

Functionally, removes the 2'-phosphate from RNA via an intermediate in which the phosphate is ADP-ribosylated by NAD followed by a presumed transesterification to release the RNA and generate ADP-ribose 1''-2''-cyclic phosphate (APPR&gt;P). May function as an ADP-ribosylase. In Methanosarcina barkeri (strain Fusaro / DSM 804), this protein is Probable RNA 2'-phosphotransferase.